We begin with the raw amino-acid sequence, 318 residues long: Isoflavone reductase (318 aa).

Residues 11–17, arginine 36, and lysine 44 each bind NADP(+); that span reads GPTGAIG. The active-site Proton acceptor is the lysine 144. Arginine 148 provides a ligand contact to NADP(+).

The protein belongs to the NmrA-type oxidoreductase family. Isoflavone reductase subfamily.

The catalysed reaction is (3R)-vestitone + NADP(+) = 2'-hydroxyformononetin + NADPH + 2 H(+). Its pathway is phytoalexin biosynthesis; pterocarpan phytoalexin biosynthesis. Functionally, reduces achiral isoflavones to chiral isoflavanones during the biosynthesis of chiral pterocarpan phytoalexins. The reduction product is a third isomer, which represents the penultimate intermediate in the synthesis of the phytoalexin (-)-medicarpin, the major phytoalexin in Alfalfa. This is Isoflavone reductase from Medicago sativa (Alfalfa).